Reading from the N-terminus, the 132-residue chain is Small ribosomal subunit protein uS8 (132 aa).

The protein belongs to the universal ribosomal protein uS8 family. Part of the 30S ribosomal subunit. Contacts proteins S5 and S12.

Functionally, one of the primary rRNA binding proteins, it binds directly to 16S rRNA central domain where it helps coordinate assembly of the platform of the 30S subunit. This Staphylococcus saprophyticus subsp. saprophyticus (strain ATCC 15305 / DSM 20229 / NCIMB 8711 / NCTC 7292 / S-41) protein is Small ribosomal subunit protein uS8.